Consider the following 1232-residue polypeptide: Dynactin subunit 1 (1232 aa).

Positions 31-73 constitute a CAP-Gly domain; sequence GATLFATGKWVGVILDDSKGKNDGTVQGRRYFTCEENHGIFVR. 2 disordered regions span residues 82-183 and 339-358; these read DGAD…AQVK and SASE…KKNT. Low complexity predominate over residues 86 to 95; the sequence is TTSPETPEPT. A compositionally biased stretch (polar residues) spans 108–117; sequence PKSSKLPTRP. Over residues 118–130 the composition is skewed to low complexity; the sequence is SSSAASSGTASAS. Residues 133-144 show a composition bias toward polar residues; sequence EISSSEPSTPAQ. Residues 146–163 are compositionally biased toward low complexity; it reads PLAAPIIPSPSSAITSPV. Coiled-coil stretches lie at residues 170-505, 908-1005, 1046-1071, and 1136-1166; these read GPSK…KEQQ, ETVI…RTIE, LLLQ…LKAH, and AAQL…ETVS. Residues 172–183 show a composition bias toward basic and acidic residues; that stretch reads SKEEENLRAQVK.

Belongs to the dynactin 150 kDa subunit family. As to quaternary structure, monomer and homodimer. Subunit of dynactin, a multiprotein complex part of a tripartite complex with dynein and a adapter, such as BICDL1, BICD2 or HOOK3. The dynactin complex is built around ACTR1A/ACTB filament and consists of an actin-related filament composed of a shoulder domain, a pointed end and a barbed end. Its length is defined by its flexible shoulder domain. The soulder is composed of 2 DCTN1 subunits, 4 DCTN2 and 2 DCTN3. DCTN1/p150(glued) binds directly to microtubules and to cytoplasmic dynein.

It localises to the cytoplasm. It is found in the cytoskeleton. Its subcellular location is the microtubule organizing center. The protein resides in the centrosome. The protein localises to the centriole. It localises to the spindle. It is found in the cell cortex. In terms of biological role, part of the dynactin complex that activates the molecular motor dynein for ultra-processive transport along microtubules. Plays a key role in dynein-mediated retrograde transport of vesicles and organelles along microtubules by recruiting and tethering dynein to microtubules. Binds to both dynein and microtubules providing a link between specific cargos, microtubules and dynein. Essential for targeting dynein to microtubule plus ends, recruiting dynein to membranous cargos and enhancing dynein processivity (the ability to move along a microtubule for a long distance without falling off the track). Can also act as a brake to slow the dynein motor during motility along the microtubule. Can regulate microtubule stability by promoting microtubule formation, nucleation and polymerization and by inhibiting microtubule catastrophe in neurons. Inhibits microtubule catastrophe by binding both to microtubules and to tubulin, leading to enhanced microtubule stability along the axon. Plays a role in metaphase spindle orientation. Plays a role in centriole cohesion and subdistal appendage organization and function. Its recruitment to the centriole in a KIF3A-dependent manner is essential for the maintenance of centriole cohesion and the formation of subdistal appendage. Also required for microtubule anchoring at the mother centriole. Plays a role in primary cilia formation. The chain is Dynactin subunit 1 (dctn1) from Xenopus laevis (African clawed frog).